Here is a 147-residue protein sequence, read N- to C-terminus: Shadow of prion protein (147 aa).

The signal sequence occupies residues 1-24 (MNWTAATCWALLLAAAFLCDSCSA). The span at 26–43 (GGRGGARGSARGVRGGAR) shows a compositional bias: gly residues. The segment at 26–45 (GGRGGARGSARGVRGGARGA) is disordered. N-linked (GlcNAc...) asparagine glycosylation occurs at N107. G122 is lipidated: GPI-anchor amidated glycine. The propeptide at 123-147 (SGSVHSPRICLLLGGTLGALELLRP) is removed in mature form.

This sequence belongs to the SPRN family. N-glycosylated. As to expression, mainly expressed in brain (at protein level). In brain, it is highly expressed in the hippocampus and cerebellum and is also expressed at lower level in other areas of the brain including the cerebral cortex, the thalamus and the medulla. In hippocampus and cerebellum it is highly expressed in the cell bodies of pyramidal cells and Purkinje cells, respectively.

It is found in the cell membrane. In terms of biological role, prion-like protein that has PrP(C)-like neuroprotective activity. May act as a modulator for the biological actions of normal and abnormal PrP. The polypeptide is Shadow of prion protein (Sprn) (Mus musculus (Mouse)).